The primary structure comprises 377 residues: MSKRDFYEVLGVDRSADEREIKKAYRKLAMKYHPDRNSDDPDAEEKFKEASMAYEVLSDKEKRSAYDRMGHAAFENGMGGGGFGGAGAGNFQDIFGDIFGNFGDIFGQSRGGGGRQRRGSDLRYVIELSLEEAVRGCKKEISFTAPAPCETCDGKGAKNASDIQTCSTCGGHGQVRMQQGFFAVQQTCPNCGGSGQEIKNPCNDCHGTGVKDKSRTLEVSIPAGVDDGDRVRLAGEGEAGGAGVQNGDLYVEVRVKEHPVFKRQGADLYMDVPVSITDAALGKEVEIPTLDGKVKIKVAEGTQSGKLLRVRGKGVTPVRTTMKGDLICRIMVETPVNLTREQKDLLRQFQDTLDGDSKHHQSPKKKSFFEKLGDLFD.

One can recognise a J domain in the interval 5–70; sequence DFYEVLGVDR…EKRSAYDRMG (66 aa). The CR-type zinc finger occupies 136 to 214; it reads GCKKEISFTA…CHGTGVKDKS (79 aa). 8 residues coordinate Zn(2+): C149, C152, C166, C169, C188, C191, C202, and C205. CXXCXGXG motif repeat units lie at residues 149-156, 166-173, 188-195, and 202-209; these read CETCDGKG, CSTCGGHG, CPNCGGSG, and CNDCHGTG. The disordered stretch occupies residues 353–377; sequence LDGDSKHHQSPKKKSFFEKLGDLFD. The span at 367–377 shows a compositional bias: basic and acidic residues; that stretch reads SFFEKLGDLFD.

The protein belongs to the DnaJ family. Homodimer. Zn(2+) is required as a cofactor.

It is found in the cytoplasm. In terms of biological role, participates actively in the response to hyperosmotic and heat shock by preventing the aggregation of stress-denatured proteins and by disaggregating proteins, also in an autonomous, DnaK-independent fashion. Unfolded proteins bind initially to DnaJ; upon interaction with the DnaJ-bound protein, DnaK hydrolyzes its bound ATP, resulting in the formation of a stable complex. GrpE releases ADP from DnaK; ATP binding to DnaK triggers the release of the substrate protein, thus completing the reaction cycle. Several rounds of ATP-dependent interactions between DnaJ, DnaK and GrpE are required for fully efficient folding. Also involved, together with DnaK and GrpE, in the DNA replication of plasmids through activation of initiation proteins. This Psychrobacter sp. (strain PRwf-1) protein is Chaperone protein DnaJ.